A 364-amino-acid polypeptide reads, in one-letter code: S-adenosylmethionine:tRNA ribosyltransferase-isomerase (364 aa).

The protein belongs to the QueA family. In terms of assembly, monomer.

It localises to the cytoplasm. The catalysed reaction is 7-aminomethyl-7-carbaguanosine(34) in tRNA + S-adenosyl-L-methionine = epoxyqueuosine(34) in tRNA + adenine + L-methionine + 2 H(+). It participates in tRNA modification; tRNA-queuosine biosynthesis. Its function is as follows. Transfers and isomerizes the ribose moiety from AdoMet to the 7-aminomethyl group of 7-deazaguanine (preQ1-tRNA) to give epoxyqueuosine (oQ-tRNA). The polypeptide is S-adenosylmethionine:tRNA ribosyltransferase-isomerase (Bradyrhizobium sp. (strain BTAi1 / ATCC BAA-1182)).